Consider the following 445-residue polypeptide: 6-phosphogluconate dehydrogenase, decarboxylating (445 aa).

Residues 1–4 (AVMG), 22–24 (NRS), 63–65 (VQA), and Asn91 each bind NADP(+). Substrate contacts are provided by residues Asn91 and 117 to 119 (SGG). Lys172 (proton acceptor) is an active-site residue. Position 175-176 (175-176 (HN)) interacts with substrate. Residue Glu179 is the Proton donor of the active site. Substrate contacts are provided by Tyr180, Lys249, Arg276, Arg434, and His440.

Belongs to the 6-phosphogluconate dehydrogenase family. In terms of assembly, homodimer.

The catalysed reaction is 6-phospho-D-gluconate + NADP(+) = D-ribulose 5-phosphate + CO2 + NADPH. The protein operates within carbohydrate degradation; pentose phosphate pathway; D-ribulose 5-phosphate from D-glucose 6-phosphate (oxidative stage): step 3/3. In terms of biological role, catalyzes the oxidative decarboxylation of 6-phosphogluconate to ribulose 5-phosphate and CO(2), with concomitant reduction of NADP to NADPH. This chain is 6-phosphogluconate dehydrogenase, decarboxylating (gnd), found in Pseudescherichia vulneris (Escherichia vulneris).